A 578-amino-acid polypeptide reads, in one-letter code: Kelch-like protein 30 (578 aa).

The BTB domain maps to 33 to 100; sequence ADVTLLVGGR…VYTGRLTITQ (68 aa). The 103-residue stretch at 153 to 255 folds into the BACK domain; sequence KAWAFLRENF…EACRAALSQG (103 aa). 6 Kelch repeats span residues 270–326, 327–377, 378–422, 424–471, 473–513, and 514–563; these read VLVV…ALNN, NIYV…ALNG, EIYV…GCRG, LYLV…ALHG, LYLI…PLGD, and ALYV…TVFL.

The sequence is that of Kelch-like protein 30 (KLHL30) from Homo sapiens (Human).